A 200-amino-acid chain; its full sequence is NADH-quinone oxidoreductase subunit C (200 aa).

It belongs to the complex I 30 kDa subunit family. In terms of assembly, NDH-1 is composed of 14 different subunits. Subunits NuoB, C, D, E, F, and G constitute the peripheral sector of the complex.

It localises to the cell inner membrane. The catalysed reaction is a quinone + NADH + 5 H(+)(in) = a quinol + NAD(+) + 4 H(+)(out). NDH-1 shuttles electrons from NADH, via FMN and iron-sulfur (Fe-S) centers, to quinones in the respiratory chain. The immediate electron acceptor for the enzyme in this species is believed to be ubiquinone. Couples the redox reaction to proton translocation (for every two electrons transferred, four hydrogen ions are translocated across the cytoplasmic membrane), and thus conserves the redox energy in a proton gradient. This chain is NADH-quinone oxidoreductase subunit C, found in Rhizobium etli (strain ATCC 51251 / DSM 11541 / JCM 21823 / NBRC 15573 / CFN 42).